The primary structure comprises 453 residues: Endoglucanase A (453 aa).

An N-terminal signal peptide occupies residues M1–S26. The active-site Nucleophile is D82. Residues T115–P126 form a linker ('hinge') (Pro-Thr box) region. H417 is an active-site residue.

Belongs to the glycosyl hydrolase 9 (cellulase E) family. As to quaternary structure, monomer.

The protein resides in the periplasm. The catalysed reaction is Endohydrolysis of (1-&gt;4)-beta-D-glucosidic linkages in cellulose, lichenin and cereal beta-D-glucans.. High levels of endoglucanase activity detected on acid-swollen cellulose, ball-milled cellulose, and carboxymethyl cellulose; moderate levels detected on filter paper, phosphoric acid-swollen cellulose, lichenan, and xylan. The chain is Endoglucanase A (endA) from Fibrobacter succinogenes (Bacteroides succinogenes).